A 76-amino-acid polypeptide reads, in one-letter code: Omega-conotoxin-like TxO5 (76 aa).

The N-terminal stretch at 1 to 22 is a signal peptide; the sequence is MKLTCMVIVAVLFLTAWTFVTA. Positions 23–50 are excised as a propeptide; sequence ITSNGLENLFPNAHHEMKNPEASKLNKR. Intrachain disulfides connect cysteine 51–cysteine 66, cysteine 58–cysteine 70, and cysteine 65–cysteine 75.

This sequence belongs to the conotoxin O1 superfamily. In terms of tissue distribution, expressed by the venom duct.

It is found in the secreted. Functionally, omega-conotoxins act at presynaptic membranes, they bind and block voltage-gated calcium channels (Cav). The protein is Omega-conotoxin-like TxO5 (TXO5) of Conus textile (Cloth-of-gold cone).